Here is a 334-residue protein sequence, read N- to C-terminus: Anthranilate phosphoribosyltransferase (334 aa).

5-phospho-alpha-D-ribose 1-diphosphate-binding positions include Gly79, 82–83, Ser87, 89–92, 107–115, and Ser119; these read GD, NIST, and KHGNRSISS. Gly79 is an anthranilate binding site. Mg(2+) is bound at residue Ser91. Asn110 contacts anthranilate. Arg165 is an anthranilate binding site. Mg(2+) contacts are provided by Asp224 and Glu225.

It belongs to the anthranilate phosphoribosyltransferase family. As to quaternary structure, homodimer. It depends on Mg(2+) as a cofactor.

It catalyses the reaction N-(5-phospho-beta-D-ribosyl)anthranilate + diphosphate = 5-phospho-alpha-D-ribose 1-diphosphate + anthranilate. Its pathway is amino-acid biosynthesis; L-tryptophan biosynthesis; L-tryptophan from chorismate: step 2/5. Catalyzes the transfer of the phosphoribosyl group of 5-phosphorylribose-1-pyrophosphate (PRPP) to anthranilate to yield N-(5'-phosphoribosyl)-anthranilate (PRA). This chain is Anthranilate phosphoribosyltransferase, found in Streptococcus gordonii (strain Challis / ATCC 35105 / BCRC 15272 / CH1 / DL1 / V288).